The following is a 1338-amino-acid chain: Aldehyde oxidase 1 (1338 aa).

The 2Fe-2S ferredoxin-type domain maps to 5-92; the sequence is SELLFYVNGR…GTAVTTVEGI (88 aa). Mo-molybdopterin-binding residues include Gln-113 and Cys-151. One can recognise an FAD-binding PCMH-type domain in the interval 236–421; the sequence is FGSERMMWFS…VSVNIPYSRK (186 aa). FAD-binding positions include 264 to 271, Ala-345, Ser-354, His-358, Asp-367, and Leu-411; that span reads VIMGNTSV. Mo-molybdopterin is bound by residues 806–807 and Met-1047; that span reads AF. Residue Ser-1068 is modified to Phosphoserine. Residues 1088 to 1091, Gln-1203, and Leu-1268 each bind Mo-molybdopterin; that span reads GSVV. The active-site Proton acceptor; for azaheterocycle hydroxylase activity is the Glu-1270.

This sequence belongs to the xanthine dehydrogenase family. Homodimer. Requires [2Fe-2S] cluster as cofactor. The cofactor is FAD. It depends on Mo-molybdopterin as a cofactor. As to expression, detected at high levels in liver, also detected in lung, kidney, lacrimal gland and olfactory mucosa.

The protein localises to the cytoplasm. The catalysed reaction is an aldehyde + O2 + H2O = a carboxylate + H2O2 + H(+). It carries out the reaction retinal + O2 + H2O = retinoate + H2O2 + H(+). In terms of biological role, oxidase with broad substrate specificity, oxidizing aromatic azaheterocycles, such as N1-methylnicotinamide, N-methylphthalazinium and phthalazine, as well as aldehydes, such as benzaldehyde, retinal, pyridoxal, and vanillin. Plays a key role in the metabolism of xenobiotics and drugs containing aromatic azaheterocyclic substituents. Participates in the bioactivation of prodrugs such as famciclovir, catalyzing the oxidation step from 6-deoxypenciclovir to penciclovir, which is a potent antiviral agent. Is probably involved in the regulation of reactive oxygen species homeostasis. May be a prominent source of superoxide generation via the one-electron reduction of molecular oxygen. May also catalyze nitric oxide (NO) production via the reduction of nitrite to NO with NADH or aldehyde as electron donor. May play a role in adipogenesis. This is Aldehyde oxidase 1 (AOX1) from Macaca fascicularis (Crab-eating macaque).